Here is a 330-residue protein sequence, read N- to C-terminus: Stimulated by retinoic acid gene 8 protein homolog (330 aa).

Residues 50–55 carry the Nuclear localization signal (NLS) motif; that stretch reads RVARRR. Residues 88–112 are a coiled coil; sequence QVLNKAKSHIPELEQTLDNLLKLKA.

In terms of assembly, interacts with XPO1. Interacts with MEIOSIN. In terms of processing, phosphorylated. As to expression, expressed specifically in testis and fetal ovaries.

Its subcellular location is the cytoplasm. The protein resides in the nucleus. Meiosis-inducer required for the transition into meiosis for both female and male germ cells. In female germ cells, acts downstream of ZGLP1 as a key effector of the meiotic program: required for premeiotic DNA replication and subsequent events in meiotic prophase. During spermatogenesis, next to its role in meiotic initiation, promotes (but is not required for) spermatogonial differentiation. In complex with MEIOSIN, directly activates the transcription of a subset of critical meiotic genes playing a central role in cell-cycle switching from mitosis to meiosis. This Homo sapiens (Human) protein is Stimulated by retinoic acid gene 8 protein homolog.